We begin with the raw amino-acid sequence, 398 residues long: uncharacterized protein (398 aa).

A Radical SAM core domain is found at 21–253; sequence TNFGPTNLII…WQLTSTSEPE (233 aa). 3 residues coordinate [4Fe-4S] cluster: cysteine 37, cysteine 41, and cysteine 44.

The protein belongs to the radical SAM superfamily. Anaerobic sulfatase-maturating enzyme family. Requires [4Fe-4S] cluster as cofactor.

This is an uncharacterized protein from Synechocystis sp. (strain ATCC 27184 / PCC 6803 / Kazusa).